A 691-amino-acid chain; its full sequence is Solute carrier organic anion transporter family member 1B1 (691 aa).

Residues 1-28 (MDQNQHLNKTAEAQPSENKKTRYCNGLK) lie on the Cytoplasmic side of the membrane. The chain crosses the membrane as a helical span at residues 29–48 (MFLAALSLSFIAKTLGAIIM). The Extracellular segment spans residues 49-67 (KSSIIHIERRFEISSSLVG). The helical transmembrane segment at 68-88 (FIDGSFEIGNLLVIVFVSYFG) threads the bilayer. Over 89–94 (SKLHRP) the chain is Cytoplasmic. Residues 95 to 119 (KLIGIGCFIMGIGGVLTALPHFFMG) form a helical membrane-spanning segment. Topologically, residues 120–168 (YYRYSKETNINSSENSTSTLSTCLINQILSLNRASPEIVGKGCLKESGS) are extracellular. N-linked (GlcNAc...) asparagine glycans are attached at residues Asn130 and Asn134. A helical membrane pass occupies residues 169-197 (YMWIYVFMGNMLRGIGETPIVPLGLSYID). Residues 198-216 (DFAKEGHSSLYLGILNAIA) lie on the Cytoplasmic side of the membrane. Residues 217 to 237 (MIGPIIGFTLGSLFSKMYVDI) form a helical membrane-spanning segment. At 238-255 (GYVDLSTIRITPTDSRWV) the chain is on the extracellular side. The chain crosses the membrane as a helical span at residues 256-280 (GAWWLNFLVSGLFSIISSIPFFFLP). Topologically, residues 281–331 (QTPNKPQKERKASLSLHVLETNDEKDQTANLTNQGKNITKNVTGFFQSFKS) are cytoplasmic. Phosphoserine occurs at positions 293 and 295. The helical transmembrane segment at 332-353 (ILTNPLYVMFVLLTLLQVSSYI) threads the bilayer. Residues 354-373 (GAFTYVFKYVEQQYGQPSSK) lie on the Extracellular side of the membrane. The helical transmembrane segment at 374-397 (ANILLGVITIPIFASGMFLGGYII) threads the bilayer. The Cytoplasmic segment spans residues 398 to 401 (KKFK). A helical membrane pass occupies residues 402–425 (LNTVGIAKFSCFTAVMSLSFYLLY). The Extracellular portion of the chain corresponds to 426–537 (FFILCENKSV…DACTRKFYFF (112 aa)). N-linked (GlcNAc...) asparagine glycosylation is present at Asn432. Residues 453 to 508 (DVPLSYCNSDCNCDESQWEPVCGNNGITYISPCLAGCKSSSGNKKPIVFYNCSCLE) form the Kazal-like domain. Intrachain disulfides connect Cys459–Cys489, Cys465–Cys485, and Cys474–Cys506. 2 N-linked (GlcNAc...) asparagine glycosylation sites follow: Asn503 and Asn516. A helical membrane pass occupies residues 538–560 (VAIQVLNLFFSALGGTSHVMLIV). Topologically, residues 561-569 (KIVQPELKS) are cytoplasmic. The chain crosses the membrane as a helical span at residues 570–595 (LALGFHSMVIRALGGILAPIYFGALI). Over 596 to 629 (DTTCIKWSTNNCGTRGSCRTYNSTSFSRVYLGLS) the chain is Extracellular. N-linked (GlcNAc...) asparagine glycosylation is present at Asn617. Residues 630–647 (SMLRVSSLVLYIILIYAM) traverse the membrane as a helical segment. Topologically, residues 648 to 691 (KKKYQEKDINASENGSVMDEANLESLNKNKHFVPSAGADSETHC) are cytoplasmic. Residues Ser672 and Ser682 each carry the phosphoserine modification.

Belongs to the organo anion transporter (TC 2.A.60) family. In terms of tissue distribution, highly expressed in liver, at the basolateral membranes of centrilobular hepatocytes. Expressed in liver (at protein level). Expressed in fetal liver. Not detected in heart, brain, placenta, lung, skeletal muscle, kidney, pancreas, spleen, thymus, prostate, testis, ovary, small intestine, colon and leukocyte. In testis, primarily localized to the basal membrane of Sertoli cells and weakly expressed in Leydig cells and within the tubules.

The protein resides in the basolateral cell membrane. Its subcellular location is the basal cell membrane. The catalysed reaction is taurocholate(out) = taurocholate(in). It carries out the reaction dehydroepiandrosterone 3-sulfate(out) = dehydroepiandrosterone 3-sulfate(in). The enzyme catalyses estrone 3-sulfate(out) = estrone 3-sulfate(in). It catalyses the reaction 3,3',5'-triiodo-L-thyronine(out) = 3,3',5'-triiodo-L-thyronine(in). The catalysed reaction is L-thyroxine(out) = L-thyroxine(in). It carries out the reaction prostaglandin E2(out) = prostaglandin E2(in). The enzyme catalyses thromboxane B2(out) = thromboxane B2(in). It catalyses the reaction 17beta-estradiol 17-O-(beta-D-glucuronate)(out) = 17beta-estradiol 17-O-(beta-D-glucuronate)(in). The catalysed reaction is leukotriene C4(out) = leukotriene C4(in). It carries out the reaction leukotriene E4(out) = leukotriene E4(in). The enzyme catalyses (4E,15E)-bilirubin IXalpha C8-beta-D-glucuronoside(out) = (4E,15E)-bilirubin IXalpha C8-beta-D-glucuronoside(in). It catalyses the reaction bilirubin IXalpha bis-beta-D-glucuronoside(out) = bilirubin IXalpha bis-beta-D-glucuronoside(in). In terms of biological role, mediates the Na(+)-independent uptake of organic anions. Shows broad substrate specificity, can transport both organic anions such as bile acid taurocholate (cholyltaurine) and conjugated steroids (dehydroepiandrosterone 3-sulfate, 17-beta-glucuronosyl estradiol, and estrone 3-sulfate), as well as eicosanoids (prostaglandin E2, thromboxane B2, leukotriene C4, and leukotriene E4), and thyroid hormones (T4/L-thyroxine, and T3/3,3',5'-triiodo-L-thyronine). Can take up bilirubin glucuronides from plasma into the liver, contributing to the detoxification-enhancing liver-blood shuttling loop. Involved in the clearance of endogenous and exogenous substrates from the liver. Transports coproporphyrin I and III, by-products of heme synthesis, and may be involved in their hepatic disposition. May contribute to regulate the transport of organic compounds in testes across the blood-testis-barrier. Can transport HMG-CoA reductase inhibitors (also known as statins), such as pravastatin and pitavastatin, a clinically important class of hypolipidemic drugs. May play an important role in plasma and tissue distribution of the structurally diverse chemotherapeutic drug methotrexate. May also transport antihypertension agents, such as the angiotensin-converting enzyme (ACE) inhibitor prodrug enalapril, and the highly selective angiotensin II AT1-receptor antagonist valsartan, in the liver. Shows a pH-sensitive substrate specificity towards prostaglandin E2 and T4 which may be ascribed to the protonation state of the binding site and leads to a stimulation of substrate transport in an acidic microenvironment. Hydrogencarbonate/HCO3(-) acts as the probable counteranion that exchanges for organic anions. The protein is Solute carrier organic anion transporter family member 1B1 (SLCO1B1) of Homo sapiens (Human).